The primary structure comprises 132 residues: Small ribosomal subunit protein uS8 (132 aa).

Belongs to the universal ribosomal protein uS8 family. In terms of assembly, part of the 30S ribosomal subunit. Contacts proteins S5 and S12.

Its function is as follows. One of the primary rRNA binding proteins, it binds directly to 16S rRNA central domain where it helps coordinate assembly of the platform of the 30S subunit. This Flavobacterium psychrophilum (strain ATCC 49511 / DSM 21280 / CIP 103535 / JIP02/86) protein is Small ribosomal subunit protein uS8.